Here is a 653-residue protein sequence, read N- to C-terminus: DNA-directed RNA polymerase III subunit RPC-3 (653 aa).

Disordered stretches follow at residues 141 to 186 (INGV…DSDP), 280 to 309 (DSSA…DFSD), and 422 to 442 (IKED…KRRG). Residues 159-170 (AENHTDHAHDYQ) are compositionally biased toward basic and acidic residues. 2 stretches are compositionally biased toward acidic residues: residues 293 to 309 (PLED…DFSD) and 424 to 433 (EDEDDEDEEG). A leucine-zipper region spans residues 580–601 (TYKSMSRCLQRIRVEREKLKFL).

This sequence belongs to the RNA polymerase beta chain family. Component of the RNA polymerase III (Pol III) complex consisting of 17 subunits.

The protein localises to the nucleus. Functionally, DNA-dependent RNA polymerase catalyzes the transcription of DNA into RNA using the four ribonucleoside triphosphates as substrates. Specific core component of RNA polymerase III which synthesizes small RNAs, such as 5S rRNA and tRNAs. The protein is DNA-directed RNA polymerase III subunit RPC-3 (RPC-82) of Coccidioides immitis (strain RS) (Valley fever fungus).